The chain runs to 20 residues: Fibrinogen beta chain (20 aa).

Residues 1 to 20 (ATDYEDEEFPGAVPPSVGAR) form a disordered region. Thr2 carries O-linked (GalNAc...) threonine glycosylation. Tyr4 carries the sulfotyrosine modification.

In terms of assembly, heterohexamer; disulfide linked. Contains 2 sets of 3 non-identical chains (alpha, beta and gamma). The 2 heterotrimers are in head to head conformation with the N-termini in a small central domain. In terms of processing, conversion of fibrinogen to fibrin is triggered by thrombin, which cleaves fibrinopeptides A and B from alpha and beta chains, and thus exposes the N-terminal polymerization sites responsible for the formation of the soft clot.

It localises to the secreted. Its function is as follows. Cleaved by the protease thrombin to yield monomers which, together with fibrinogen alpha (FGA) and fibrinogen gamma (FGG), polymerize to form an insoluble fibrin matrix. Fibrin has a major function in hemostasis as one of the primary components of blood clots. In addition, functions during the early stages of wound repair to stabilize the lesion and guide cell migration during re-epithelialization. Was originally thought to be essential for platelet aggregation, based on in vitro studies using anticoagulated blood. However subsequent studies have shown that it is not absolutely required for thrombus formation in vivo. Enhances expression of SELP in activated platelets. Maternal fibrinogen is essential for successful pregnancy. Fibrin deposition is also associated with infection, where it protects against IFNG-mediated hemorrhage. May also facilitate the antibacterial immune response via both innate and T-cell mediated pathways. The polypeptide is Fibrinogen beta chain (FGB) (Elephas maximus (Indian elephant)).